The following is a 199-amino-acid chain: N-(5'-phosphoribosyl)anthranilate isomerase (199 aa).

This sequence belongs to the TrpF family.

It carries out the reaction N-(5-phospho-beta-D-ribosyl)anthranilate = 1-(2-carboxyphenylamino)-1-deoxy-D-ribulose 5-phosphate. The protein operates within amino-acid biosynthesis; L-tryptophan biosynthesis; L-tryptophan from chorismate: step 3/5. In Streptococcus pneumoniae (strain ATCC 700669 / Spain 23F-1), this protein is N-(5'-phosphoribosyl)anthranilate isomerase.